The primary structure comprises 356 residues: Peptide chain release factor 1 (356 aa).

Position 233 is an N5-methylglutamine (Gln-233).

Belongs to the prokaryotic/mitochondrial release factor family. Post-translationally, methylated by PrmC. Methylation increases the termination efficiency of RF1.

The protein resides in the cytoplasm. Its function is as follows. Peptide chain release factor 1 directs the termination of translation in response to the peptide chain termination codons UAG and UAA. The protein is Peptide chain release factor 1 (prfA) of Bacillus subtilis (strain 168).